We begin with the raw amino-acid sequence, 403 residues long: Conserved oligomeric Golgi complex subunit 5 (403 aa).

The protein belongs to the COG5 family. As to quaternary structure, component of the conserved oligomeric Golgi (COG or Sec34/Sec35) complex which consists of eight different proteins COG1-COG8.

The protein localises to the golgi apparatus membrane. Acts as a component of the peripheral membrane COG complex that is involved in intra-Golgi protein trafficking. COG is located at the cis-Golgi, and regulates tethering of retrograde intra-Golgi vesicles and possibly a number of other membrane trafficking events. In Saccharomyces cerevisiae (strain ATCC 204508 / S288c) (Baker's yeast), this protein is Conserved oligomeric Golgi complex subunit 5 (COG5).